Reading from the N-terminus, the 112-residue chain is Serum amyloid A protein (112 aa).

Glutamine 1 carries the post-translational modification Pyrrolidone carboxylic acid. The segment covering 75-86 (MTRDQVREDTKA) has biased composition (basic and acidic residues). Positions 75–112 (MTRDQVREDTKADQFANEWGRSGKDPNHFRPPGLPDKY) are disordered.

It belongs to the SAA family. In terms of tissue distribution, expressed by the liver; secreted in plasma.

It localises to the secreted. Major acute phase reactant. Apolipoprotein of the HDL complex. The sequence is that of Serum amyloid A protein (SAA1) from Ovis aries (Sheep).